We begin with the raw amino-acid sequence, 377 residues long: MGIKGLNAIISEHVPSAVRKSDIKTFFGRKVAIDASMSLYQFLIAVRQQDGGQLTNEAGETTSHLMGMFYRTLRMIDNGIKPCYVFDGKPPVLKSHELSKRTARREETEKKLQEATDQAEKMKQERRLVKVSKEHNDEAKQLLELMGIPYITAPCEAESQCAELAKCGKVYAAASEDMDTLCYRTPYLLRHLTFSEAKKEPIHEIDTELVLKGLDLTLEQFVDLGIMLGCDYCDSIKGVGPVTALKLIKEYGSLEKIIEYIESDSSNSKWKIPNDWPYKDARELFLKPDVINGNEVELKWQPPNEKGLIDFLCGEKKFSEERVKSGIERLKKGLKSGVQGRLDGFFQVVPKTKEQLAKAAAKAKAAKKSGKVTKKRR.

The interval 1–105 is N-domain; it reads MGIKGLNAII…HELSKRTARR (105 aa). D34 contributes to the Mg(2+) binding site. DNA is bound by residues R47 and R71. D87 is a binding site for Mg(2+). A disordered region spans residues 99–119; it reads SKRTARREETEKKLQEATDQA. Residues 120–251 form an I-domain region; the sequence is EKMKQERRLV…VTALKLIKEY (132 aa). E156, E158, D177, and D179 together coordinate Mg(2+). DNA is bound at residue E156. DNA contacts are provided by G229 and D231. Mg(2+) is bound at residue D231. Positions 338–346 are interaction with PCNA; sequence VQGRLDGFF.

It belongs to the XPG/RAD2 endonuclease family. FEN1 subfamily. In terms of assembly, interacts with PCNA. Three molecules of FEN1 bind to one PCNA trimer with each molecule binding to one PCNA monomer. PCNA stimulates the nuclease activity without altering cleavage specificity. Mg(2+) serves as cofactor. Phosphorylated. Phosphorylation upon DNA damage induces relocalization to the nuclear plasma.

It is found in the nucleus. Its subcellular location is the nucleolus. The protein resides in the nucleoplasm. It localises to the mitochondrion. Structure-specific nuclease with 5'-flap endonuclease and 5'-3' exonuclease activities involved in DNA replication and repair. During DNA replication, cleaves the 5'-overhanging flap structure that is generated by displacement synthesis when DNA polymerase encounters the 5'-end of a downstream Okazaki fragment. It enters the flap from the 5'-end and then tracks to cleave the flap base, leaving a nick for ligation. Also involved in the long patch base excision repair (LP-BER) pathway, by cleaving within the apurinic/apyrimidinic (AP) site-terminated flap. Acts as a genome stabilization factor that prevents flaps from equilibrating into structures that lead to duplications and deletions. Also possesses 5'-3' exonuclease activity on nicked or gapped double-stranded DNA, and exhibits RNase H activity. Also involved in replication and repair of rDNA and in repairing mitochondrial DNA. The protein is Flap endonuclease 1 of Vanderwaltozyma polyspora (strain ATCC 22028 / DSM 70294 / BCRC 21397 / CBS 2163 / NBRC 10782 / NRRL Y-8283 / UCD 57-17) (Kluyveromyces polysporus).